Reading from the N-terminus, the 343-residue chain is UDP-3-O-acylglucosamine N-acyltransferase 2 (343 aa).

The active-site Proton acceptor is the His-251.

It belongs to the transferase hexapeptide repeat family. LpxD subfamily. Homotrimer.

It catalyses the reaction a UDP-3-O-[(3R)-3-hydroxyacyl]-alpha-D-glucosamine + a (3R)-hydroxyacyl-[ACP] = a UDP-2-N,3-O-bis[(3R)-3-hydroxyacyl]-alpha-D-glucosamine + holo-[ACP] + H(+). The protein operates within bacterial outer membrane biogenesis; LPS lipid A biosynthesis. Functionally, catalyzes the N-acylation of UDP-3-O-acylglucosamine using 3-hydroxyacyl-ACP as the acyl donor. Is involved in the biosynthesis of lipid A, a phosphorylated glycolipid that anchors the lipopolysaccharide to the outer membrane of the cell. The chain is UDP-3-O-acylglucosamine N-acyltransferase 2 from Legionella pneumophila (strain Paris).